The following is a 471-amino-acid chain: Chromosomal replication initiator protein DnaA (471 aa).

The segment at 1–77 is domain I, interacts with DnaA modulators; it reads MELNSSFWTL…YTEISDTYGK (77 aa). The tract at residues 77–130 is domain II; that stretch reads KPFEVEFSITGNKINSHIETSTTPDEVLSGSEILQAQLARAQNIQPTQPRSSSD. The segment at 131–349 is domain III, AAA+ region; that stretch reads TLNSELTFST…GNLKKVKMFS (219 aa). ATP contacts are provided by Gly-176, Gly-178, Lys-179, and Thr-180. The interval 350–471 is domain IV, binds dsDNA; it reads ELQGLPIDHE…EQRIHNITRV (122 aa).

Belongs to the DnaA family. As to quaternary structure, oligomerizes as a right-handed, spiral filament on DNA at oriC.

The protein localises to the cytoplasm. Its function is as follows. Plays an essential role in the initiation and regulation of chromosomal replication. ATP-DnaA binds to the origin of replication (oriC) to initiate formation of the DNA replication initiation complex once per cell cycle. Binds the DnaA box (a 9 base pair repeat at the origin) and separates the double-stranded (ds)DNA. Forms a right-handed helical filament on oriC DNA; dsDNA binds to the exterior of the filament while single-stranded (ss)DNA is stabiized in the filament's interior. The ATP-DnaA-oriC complex binds and stabilizes one strand of the AT-rich DNA unwinding element (DUE), permitting loading of DNA polymerase. After initiation quickly degrades to an ADP-DnaA complex that is not apt for DNA replication. Binds acidic phospholipids. The polypeptide is Chromosomal replication initiator protein DnaA (Bdellovibrio bacteriovorus (strain ATCC 15356 / DSM 50701 / NCIMB 9529 / HD100)).